The primary structure comprises 60 residues: MAKGKENRIVITLECTEAKKEGKPVSRYTTTKNKKNTTERLVLKKYNPNLQRHTLHKEIK.

It belongs to the bacterial ribosomal protein bL33 family.

The sequence is that of Large ribosomal subunit protein bL33 from Chlorobium chlorochromatii (strain CaD3).